Here is a 444-residue protein sequence, read N- to C-terminus: NADH-ubiquinone oxidoreductase chain 4 (444 aa).

A run of 13 helical transmembrane segments spans residues 4-24 (YLFM…WWLV), 28-48 (IFLL…LSMI), 53-73 (GVDF…CLMI), 87-107 (NFFV…FSSL), 109-129 (LFSF…LILG), 141-161 (VYLM…LFSI), 173-193 (LIDF…AFLV), 212-232 (PISG…YGIF), 245-265 (FNYF…FVCF), 272-294 (SLIA…TMNW), 306-326 (GHGI…ELLG), 330-350 (LLIN…WFLL), and 373-393 (IISW…FSAV).

It belongs to the complex I subunit 4 family.

The protein localises to the mitochondrion membrane. The catalysed reaction is a ubiquinone + NADH + 5 H(+)(in) = a ubiquinol + NAD(+) + 4 H(+)(out). In terms of biological role, core subunit of the mitochondrial membrane respiratory chain NADH dehydrogenase (Complex I) that is believed to belong to the minimal assembly required for catalysis. Complex I functions in the transfer of electrons from NADH to the respiratory chain. The immediate electron acceptor for the enzyme is believed to be ubiquinone. The chain is NADH-ubiquinone oxidoreductase chain 4 (ND4) from Locusta migratoria (Migratory locust).